Reading from the N-terminus, the 396-residue chain is Apurinic-apyrimidinic endonuclease (396 aa).

The segment covering 31–41 (KGRGKIQKHIQ) has biased composition (basic residues). Residues 31 to 100 (KGRGKIQKHI…TSGETIAQKK (70 aa)) form a disordered region. Positions 55–70 (NQSPGTTVEETLTEEN) are enriched in polar residues. A compositionally biased stretch (basic and acidic residues) spans 72–85 (STDKEETSKLENKP). Zn(2+) contacts are provided by His185, His225, Glu261, Asp295, His298, His332, Asp345, His347, and Glu377.

Belongs to the AP endonuclease 2 family. Requires Zn(2+) as cofactor.

It localises to the nucleus. This is Apurinic-apyrimidinic endonuclease (apn-1) from Caenorhabditis elegans.